The primary structure comprises 265 residues: Asparagine-rich protein (265 aa).

The signal sequence occupies residues 1-21; that stretch reads MSRLTLLVLLVIAAVIQKVHG. Disordered stretches follow at residues 20–71 and 88–183; these read HGQG…NRNI and SNQN…NQQY. Basic and acidic residues-rich tracts occupy residues 22-35 and 44-55; these read QGRENEKKNEHEPG and EKTERNLREPNR. The segment covering 88-98 has biased composition (low complexity); sequence SNQNNFGNNRS. The segment covering 115–124 has biased composition (basic and acidic residues); it reads NKSEVEKENG. The span at 152–166 shows a compositional bias: basic residues; sequence KVQHRIAKRFQKRHP.

In terms of tissue distribution, nacreous layer of shell (at protein level). Expressed primarily in the mantle with highest level in the mantle pallium and lower level in the mantle edge.

The protein resides in the secreted. The sequence is that of Asparagine-rich protein from Pinctada maxima (Silver-lipped pearl oyster).